Here is a 667-residue protein sequence, read N- to C-terminus: Protein adenylyltransferase SelO, mitochondrial (667 aa).

Residues 1 to 6 (MASVRA) constitute a mitochondrion transit peptide. Gly154, Gly156, Lys177, Asp189, Gly190, Arg247, and Arg254 together coordinate ATP. The Proton acceptor role is filled by Asp341. 2 residues coordinate Mg(2+): Asn342 and Asp351. Asp351 provides a ligand contact to ATP. The tract at residues 628–652 (YHSEEEATGPEAVARSTEEQSSYSN) is disordered. Phosphothreonine is present on Thr635. Ser651 is modified (phosphoserine). Residue Sec665 is a non-standard amino acid, selenocysteine.

This sequence belongs to the SELO family. It depends on Mg(2+) as a cofactor.

The protein resides in the mitochondrion. The catalysed reaction is L-tyrosyl-[protein] + ATP = O-(5'-adenylyl)-L-tyrosyl-[protein] + diphosphate. It carries out the reaction L-threonyl-[protein] + ATP = 3-O-(5'-adenylyl)-L-threonyl-[protein] + diphosphate. The enzyme catalyses L-seryl-[protein] + ATP = 3-O-(5'-adenylyl)-L-seryl-[protein] + diphosphate. Functionally, catalyzes the transfer of adenosine 5'-monophosphate (AMP) to Ser, Thr and Tyr residues of target proteins (AMPylation). May be a redox-active mitochondrial selenoprotein which interacts with a redox target protein. The protein is Protein adenylyltransferase SelO, mitochondrial of Mus musculus (Mouse).